A 179-amino-acid chain; its full sequence is Stathmin-2 (179 aa).

The membrane attachment stretch occupies residues 1–26 (MAKTAMAYKEKMKELSMLSLICSCFY). Ser16 is subject to Phosphoserine. Residues Cys22 and Cys24 are each lipidated (S-palmitoyl cysteine). The SLD domain maps to 38–179 (DDMEVKQINK…NKELQVELSG (142 aa)). The tract at residues 39 to 96 (DMEVKQINKRASGQAFELILKPPSPISEAPRTLASPKKKDLSLEEIQKKLEAAEGRRK) is regulatory/phosphorylation domain. Phosphoserine is present on Ser50. A phosphoserine; by MAPK8 mark is found at Ser62 and Ser73. The stretch at 75 to 179 (KKKDLSLEEI…NKELQVELSG (105 aa)) forms a coiled coil. A phosphoserine mark is found at Ser80 and Ser97.

This sequence belongs to the stathmin family. Interacts with ITM2C. Interacts with MAPK8. Interacts with KIFBP. Interacts (via the N-terminal region) with CIB1 (via C-terminal region); the interaction is direct, occurs in a calcium-dependent manner and attenuates the neurite outgrowth inhibition of STMN2. Sumoylated. In terms of processing, phosphorylated by MAPK9 and MAPK10 in the developing brain cortex. Phosphorylated mostly by MAPK8. Post-translationally, N-terminal palmitoylation promotes specific anchoring to the cytosolic leaflet of Golgi membranes and subsequent vesicular trafficking along dendrites and axons. Neuronal Stathmins are substrates for palmitoyltransferases ZDHHC3, ZDHHC7 and ZDHHC15. As to expression, expressed in neurons (at protein level). Present in growth cones and abundant in developing neurons.

The protein localises to the cytoplasm. It is found in the perinuclear region. Its subcellular location is the cell projection. The protein resides in the growth cone. It localises to the axon. The protein localises to the membrane. It is found in the golgi apparatus. Its subcellular location is the endosome. The protein resides in the lamellipodium. In terms of biological role, regulator of microtubule stability. When phosphorylated by MAPK8, stabilizes microtubules and consequently controls neurite length in cortical neurons. In the developing brain, negatively regulates the rate of exit from multipolar stage and retards radial migration from the ventricular zone. In Rattus norvegicus (Rat), this protein is Stathmin-2 (Stmn2).